The following is a 322-amino-acid chain: MADRDSGSEQGGAALGSGGSLGHPGSGSGSGGGGGGGGGGGGSGGGGGGAPGGLQHETQELASKRVDIQNKRFYLDVKQNAKGRFLKIAEVGAGGNKSRLTLSMSVAVEFRDYLGDFIEHYAQLGPSQPPDLAQAQDEPRRALKSEFLVRENRKYYMDLKENQRGRFLRIRQTVNRGPGLGSTQGQTIALPAQGLIEFRDALAKLIDDYGVEEEPAELPEGTSLTVDNKRFFFDVGSNKYGVFMRVSEVKPTYRNSITVPYKVWAKFGHTFCKYSEEMKKIQEKQREKRAACEQLHQQQQQQQEETAAATLLLQGEEEGEED.

The disordered stretch occupies residues 1–55 (MADRDSGSEQGGAALGSGGSLGHPGSGSGSGGGGGGGGGGGGSGGGGGGAPGGLQ). An N-acetylalanine modification is found at Ala-2. A compositionally biased stretch (gly residues) spans 9-52 (EQGGAALGSGGSLGHPGSGSGSGGGGGGGGGGGGSGGGGGGAPG). A PUR repeat I repeat occupies 60–125 (ELASKRVDIQ…DFIEHYAQLG (66 aa)). One copy of the PUR repeat II repeat lies at 142–213 (ALKSEFLVRE…KLIDDYGVEE (72 aa)). The residue at position 182 (Ser-182) is a Phosphoserine. The stretch at 215 to 281 (PAELPEGTSL…CKYSEEMKKI (67 aa)) is one PUR repeat III repeat. The span at 295–314 (LHQQQQQQQEETAAATLLLQ) shows a compositional bias: low complexity. The tract at residues 295-322 (LHQQQQQQQEETAAATLLLQGEEEGEED) is disordered.

The protein belongs to the PUR DNA-binding protein family. Homodimer, heterodimer with PURB and heterotrimer with PURB and YBX1/Y-box protein 1. Interacts with FMR1; this interaction occurs in association with polyribosome.

The protein resides in the nucleus. Its function is as follows. This is a probable transcription activator that specifically binds the purine-rich single strand of the PUR element located upstream of the MYC gene. May play a role in the initiation of DNA replication and in recombination. The chain is Transcriptional activator protein Pur-alpha (PURA) from Homo sapiens (Human).